Consider the following 252-residue polypeptide: Gamma carbonic anhydrase-like 1, mitochondrial (252 aa).

The transit peptide at 1–29 (MATSIARLSRRGVTSNLIRRCFAAEAALA) directs the protein to the mitochondrion. Substrate contacts are provided by residues 99–101 (RGD) and 114–115 (QE). His120 contacts Zn(2+). Substrate contacts are provided by Arg148, Gln160, and Tyr227.

This sequence belongs to the gamma-class carbonic anhydrase family. In terms of assembly, component of the mitochondrial oxidoreductase respiratory chain complex I; element of the extra matrix-exposed domain, which is attached to the membrane arm of this complex. Interacts with GAMMACA2.

The protein localises to the mitochondrion membrane. Involved in complex I assembly in mitochondria and respiration. This Arabidopsis thaliana (Mouse-ear cress) protein is Gamma carbonic anhydrase-like 1, mitochondrial (GAMMACAL1).